Here is a 140-residue protein sequence, read N- to C-terminus: 3-hydroxyacyl-[acyl-carrier-protein] dehydratase FabZ (140 aa).

Histidine 48 is a catalytic residue.

This sequence belongs to the thioester dehydratase family. FabZ subfamily.

The protein resides in the cytoplasm. The enzyme catalyses a (3R)-hydroxyacyl-[ACP] = a (2E)-enoyl-[ACP] + H2O. Involved in unsaturated fatty acids biosynthesis. Catalyzes the dehydration of short chain beta-hydroxyacyl-ACPs and long chain saturated and unsaturated beta-hydroxyacyl-ACPs. The polypeptide is 3-hydroxyacyl-[acyl-carrier-protein] dehydratase FabZ (Exiguobacterium sibiricum (strain DSM 17290 / CCUG 55495 / CIP 109462 / JCM 13490 / 255-15)).